Reading from the N-terminus, the 661-residue chain is Translation factor GUF1 homolog, mitochondrial (661 aa).

In terms of domain architecture, tr-type G spans 59-242 (ENIRNFCIVA…AIIDRIPSPK (184 aa)). Residues 68–75 (AHVDHGKS), 135–139 (DTPGH), and 189–192 (NKVD) each bind GTP.

Belongs to the TRAFAC class translation factor GTPase superfamily. Classic translation factor GTPase family. LepA subfamily.

Its subcellular location is the mitochondrion inner membrane. The enzyme catalyses GTP + H2O = GDP + phosphate + H(+). Promotes mitochondrial protein synthesis. May act as a fidelity factor of the translation reaction, by catalyzing a one-codon backward translocation of tRNAs on improperly translocated ribosomes. Binds to mitochondrial ribosomes in a GTP-dependent manner. This Ixodes scapularis (Black-legged tick) protein is Translation factor GUF1 homolog, mitochondrial.